The primary structure comprises 317 residues: Pantothenate kinase (317 aa).

ATP is bound at residue 99–106; it reads GSVSVGKS.

It belongs to the prokaryotic pantothenate kinase family.

Its subcellular location is the cytoplasm. The enzyme catalyses (R)-pantothenate + ATP = (R)-4'-phosphopantothenate + ADP + H(+). It functions in the pathway cofactor biosynthesis; coenzyme A biosynthesis; CoA from (R)-pantothenate: step 1/5. This is Pantothenate kinase from Histophilus somni (strain 129Pt) (Haemophilus somnus).